A 555-amino-acid chain; its full sequence is Glutamine--tRNA ligase (555 aa).

Residues 35-45 (PEPNGYLHIGH) carry the 'HIGH' region motif. Residues 36–38 (EPN) and 42–48 (HIGHAKS) each bind ATP. Positions 68 and 213 each coordinate L-glutamine. ATP contacts are provided by residues Thr-232, 262-263 (RL), and 270-272 (MSK). The 'KMSKS' region signature appears at 269–273 (VMSKR).

It belongs to the class-I aminoacyl-tRNA synthetase family. Monomer.

It localises to the cytoplasm. It carries out the reaction tRNA(Gln) + L-glutamine + ATP = L-glutaminyl-tRNA(Gln) + AMP + diphosphate. This is Glutamine--tRNA ligase from Photobacterium profundum (strain SS9).